A 327-amino-acid chain; its full sequence is GMP reductase (327 aa).

The active-site Thioimidate intermediate is Cys-176. 205–228 lines the NADP(+) pocket; sequence IIADGGIRTHGDIAKSIRFGASMV.

It belongs to the IMPDH/GMPR family. GuaC type 2 subfamily.

It carries out the reaction IMP + NH4(+) + NADP(+) = GMP + NADPH + 2 H(+). Functionally, catalyzes the irreversible NADPH-dependent deamination of GMP to IMP. It functions in the conversion of nucleobase, nucleoside and nucleotide derivatives of G to A nucleotides, and in maintaining the intracellular balance of A and G nucleotides. This is GMP reductase from Streptococcus pyogenes serotype M28 (strain MGAS6180).